A 135-amino-acid chain; its full sequence is Photosystem II extrinsic protein U (135 aa).

Residues 1 to 29 form the signal peptide; it reads MKRLLSWLTGALVMASLMAGLVMPSSVYA.

This sequence belongs to the PsbU family. PSII is composed of 1 copy each of membrane proteins PsbA, PsbB, PsbC, PsbD, PsbE, PsbF, PsbH, PsbI, PsbJ, PsbK, PsbL, PsbM, PsbT, PsbX, PsbY, PsbZ, Psb30/Ycf12, peripheral proteins PsbO, CyanoQ (PsbQ), PsbU, PsbV and a large number of cofactors. It forms dimeric complexes.

It localises to the cellular thylakoid membrane. In terms of biological role, one of the extrinsic, lumenal subunits of photosystem II (PSII). PSII is a light-driven water plastoquinone oxidoreductase, using light energy to abstract electrons from H(2)O, generating a proton gradient subsequently used for ATP formation. The extrinsic proteins stabilize the structure of photosystem II oxygen-evolving complex (OEC), the ion environment of oxygen evolution and protect the OEC against heat-induced inactivation. This chain is Photosystem II extrinsic protein U, found in Synechococcus sp. (strain CC9605).